A 67-amino-acid polypeptide reads, in one-letter code: MFAGLPSLSHEQQQKAVERIHELMAQGMSSGQAIALVAEELRATHTGEQIVARFEDEDEDQDEDEDD.

Positions 48–67 (EQIVARFEDEDEDQDEDEDD) are disordered. A compositionally biased stretch (acidic residues) spans 55 to 67 (EDEDEDQDEDEDD).

It belongs to the UPF0181 family.

The sequence is that of UPF0181 protein KPK_1966 from Klebsiella pneumoniae (strain 342).